The following is a 196-amino-acid chain: Charged multivesicular body protein 1a (196 aa).

At methionine 1 the chain carries N-acetylmethionine. Residues 5 to 42 (LFQLKFTAKQLEKLAKKAEKDSKAEQAKVKKALQQKNV) are a coiled coil. Serine 101 is modified (phosphoserine). A coiled-coil region spans residues 102–124 (AMDLQKVSAVMDRFEQQVQNLDV). A Phosphoserine modification is found at serine 173. The short motif at 185–195 (DQLSRRLAALR) is the MIT-interacting motif element.

Belongs to the SNF7 family. As to quaternary structure, probable peripherally associated component of the endosomal sorting required for transport complex III (ESCRT-III). ESCRT-III components are thought to multimerize to form a flat lattice on the perimeter membrane of the endosome. Several assembly forms of ESCRT-III may exist that interact and act sequentially. Self-associates. Interacts with CHMP1B. Interacts with VPS4A. Interacts with VPS4B. Interacts with PHF1. Interacts with IST1. Interacts with MITD1. As to expression, highly expressed in adult heart, kidney and liver. Expressed at lower levels in adult colon, spleen, lung, brain, testis and muscle. Also expressed in myoblasts and embryo fibroblasts.

It is found in the cytoplasm. It localises to the endosome membrane. The protein resides in the nucleus matrix. Probable peripherally associated component of the endosomal sorting required for transport complex III (ESCRT-III) which is involved in multivesicular bodies (MVBs) formation and sorting of endosomal cargo proteins into MVBs. MVBs contain intraluminal vesicles (ILVs) that are generated by invagination and scission from the limiting membrane of the endosome and mostly are delivered to lysosomes enabling degradation of membrane proteins, such as stimulated growth factor receptors, lysosomal enzymes and lipids. The MVB pathway appears to require the sequential function of ESCRT-O, -I,-II and -III complexes. ESCRT-III proteins mostly dissociate from the invaginating membrane before the ILV is released. The ESCRT machinery also functions in topologically equivalent membrane fission events, such as the terminal stages of cytokinesis. ESCRT-III proteins are believed to mediate the necessary vesicle extrusion and/or membrane fission activities, possibly in conjunction with the AAA ATPase VPS4. Involved in cytokinesis. Involved in recruiting VPS4A and/or VPS4B to the midbody of dividing cells. May also be involved in chromosome condensation. Targets the Polycomb group (PcG) protein BMI1/PCGF4 to regions of condensed chromatin. May play a role in stable cell cycle progression and in PcG gene silencing. This Mus musculus (Mouse) protein is Charged multivesicular body protein 1a (Chmp1a).